A 182-amino-acid chain; its full sequence is Putative manganese efflux pump MntP 2 (182 aa).

The next 6 membrane-spanning stretches (helical) occupy residues 2–22 (IELTALAIALSMDAVAVSIAL), 37–57 (AGGFFGVAQMVMPLLGFYLGV), 63–83 (IGGIHHWVALGVLGFLGLKMI), 104–123 (LLLLAFVTSLDAMAAGLTLT), 127–149 (LPLWFCLLFIGGSTFLLSFGGVH), and 162–182 (AEYLGGIILILIGVKIFIEHS).

This sequence belongs to the MntP (TC 9.B.29) family.

It localises to the cell inner membrane. In terms of biological role, probably functions as a manganese efflux pump. The sequence is that of Putative manganese efflux pump MntP 2 from Wolinella succinogenes (strain ATCC 29543 / DSM 1740 / CCUG 13145 / JCM 31913 / LMG 7466 / NCTC 11488 / FDC 602W) (Vibrio succinogenes).